The following is a 1337-amino-acid chain: Nucleoporin POM152 (1337 aa).

The tract at residues 1-48 is disordered; sequence MEHRYNVFNDTPRGNHWMGSSVSGSPRPSYSSRPNVNTTRRFQYSDDE. The Cytoplasmic portion of the chain corresponds to 1–110; that stretch reads MEHRYNVFND…TDVLEISKQR (110 aa). The interval 1–175 is pore side; that stretch reads MEHRYNVFND…SFNIPRLTFK (175 aa). Residues 19–37 are compositionally biased toward low complexity; the sequence is GSSVSGSPRPSYSSRPNVN. Serine 45 and serine 60 each carry phosphoserine. A helical transmembrane segment spans residues 111–131; that stretch reads TFAVILFLIIQCYKIYDLVIL. Residues 132–148 are Perinuclear space-facing; sequence KSGLPLSGLLFKNYRFN. A helical membrane pass occupies residues 149–169; it reads FISKYFIIDSFFLYVLPSFNI. At 170-172 the chain is on the cytoplasmic side; it reads PRL. A helical membrane pass occupies residues 173 to 193; it reads TFKPWVVYLQILAMLLLNIFI. At 194 to 1337 the chain is on the perinuclear space side; the sequence is SSDHEFVLIS…FAKNDLFFNN (1144 aa). The cisternal side stretch occupies residues 196-1337; sequence DHEFVLISLI…FAKNDLFFNN (1142 aa). An N-linked (GlcNAc...) asparagine glycan is attached at asparagine 280. 8 repeat units span residues 390-413, 626-650, 732-755, 836-859, 943-966, 1058-1077, 1157-1178, and 1253-1276. The segment at 390–1276 is 8 X 24 AA approximate repeats; that stretch reads DRCIGDSDNV…EGTPPFSLTY (887 aa).

Component of the nuclear pore complex (NPC). NPC constitutes the exclusive means of nucleocytoplasmic transport. NPCs allow the passive diffusion of ions and small molecules and the active, nuclear transport receptor-mediated bidirectional transport of macromolecules such as proteins, RNAs, ribonucleoparticles (RNPs), and ribosomal subunits across the nuclear envelope. Due to its 8-fold rotational symmetry, all subunits are present with 8 copies or multiples thereof. Interacts with NUP188. Post-translationally, the N-terminus is blocked. In terms of processing, phosphorylated by CDC28.

Its subcellular location is the nucleus. The protein resides in the nuclear pore complex. It localises to the nucleus membrane. Functions as a component of the nuclear pore complex (NPC). NPC components, collectively referred to as nucleoporins (NUPs), can play the role of both NPC structural components and of docking or interaction partners for transiently associated nuclear transport factors. POM152 is important for the de novo assembly of NPCs. The sequence is that of Nucleoporin POM152 (POM152) from Saccharomyces cerevisiae (strain ATCC 204508 / S288c) (Baker's yeast).